A 173-amino-acid chain; its full sequence is Nicotinamide-nucleotide adenylyltransferase (173 aa).

It belongs to the archaeal NMN adenylyltransferase family.

The protein resides in the cytoplasm. It carries out the reaction beta-nicotinamide D-ribonucleotide + ATP + H(+) = diphosphate + NAD(+). Its pathway is cofactor biosynthesis; NAD(+) biosynthesis; NAD(+) from nicotinamide D-ribonucleotide: step 1/1. The sequence is that of Nicotinamide-nucleotide adenylyltransferase from Methanosarcina acetivorans (strain ATCC 35395 / DSM 2834 / JCM 12185 / C2A).